The sequence spans 512 residues: Maturase K (512 aa).

Belongs to the intron maturase 2 family. MatK subfamily.

It is found in the plastid. The protein localises to the chloroplast. In terms of biological role, usually encoded in the trnK tRNA gene intron. Probably assists in splicing its own and other chloroplast group II introns. The chain is Maturase K from Koelreuteria paniculata (Goldenrain tree).